Here is a 436-residue protein sequence, read N- to C-terminus: Nucleolar protein 4-like (436 aa).

Residues 1-184 (MSDSTWMSAD…KMNDSEGMDP (184 aa)) are disordered. The segment covering 41-61 (SESGSGNGSSTLNPSTSSSTQ) has biased composition (low complexity). Position 130 is a phosphoserine (S130). Residues 160 to 169 (ADDDDDDHDD) show a composition bias toward acidic residues. Residues 170–184 (HEDNDKMNDSEGMDP) are compositionally biased toward basic and acidic residues. S295 is modified (phosphoserine). The span at 351–366 (QPPASLQTGNHSNGPT) shows a compositional bias: polar residues. Residues 351–400 (QPPASLQTGNHSNGPTDLSMKGGASTTSTTPTPTPSSTSTSRPVPTAQLS) are disordered. Positions 375–396 (STTSTTPTPTPSSTSTSRPVPT) are enriched in low complexity.

This chain is Nucleolar protein 4-like (NOL4L), found in Homo sapiens (Human).